The primary structure comprises 630 residues: Glutathione hydrolase proenzyme 1 (630 aa).

Topologically, residues 1 to 49 (MGINTSSAQSSGAASIARSSVNVKSGNRHLSSNKKSATSALEERASRPS) are cytoplasmic. Residues 50–70 (ILVTFLVLAGTILSLYIWPIL) form a helical; Signal-anchor for type II membrane protein membrane-spanning segment. Residues 71–630 (SPDLFFANQR…SRKQAVAAAY (560 aa)) are Lumenal-facing. Residue Asn156 is glycosylated (N-linked (GlcNAc...) asparagine). Arg165 contributes to the L-glutamate binding site. N-linked (GlcNAc...) asparagine glycosylation is found at Asn180, Asn315, Asn397, and Asn417. The active-site Nucleophile is Thr441. Residues Ser459, Asn461, Asp483, 511 to 512 (SS), and 532 to 533 (GG) each bind L-glutamate. A glycan (N-linked (GlcNAc...) asparagine) is linked at Asn612.

This sequence belongs to the gamma-glutamyltransferase family. Heterodimer composed of the light and heavy chains. The active site is located in the light chain. Post-translationally, cleaved by autocatalysis into a large and a small subunit.

The protein resides in the endoplasmic reticulum membrane. It carries out the reaction an N-terminal (5-L-glutamyl)-[peptide] + an alpha-amino acid = 5-L-glutamyl amino acid + an N-terminal L-alpha-aminoacyl-[peptide]. The enzyme catalyses glutathione + H2O = L-cysteinylglycine + L-glutamate. It catalyses the reaction an S-substituted glutathione + H2O = an S-substituted L-cysteinylglycine + L-glutamate. It participates in sulfur metabolism; glutathione metabolism. In terms of biological role, catalyzes the transfer of the gamma-glutamyl moiety of glutathione (GSH) and other gamma-glutamyl compounds to amino acids and peptides. Major GSH-degrading enzyme, catalyzing the hydrolytic release of L-glutamate from GSH. The chain is Glutathione hydrolase proenzyme 1 (ggt1) from Schizosaccharomyces pombe (strain 972 / ATCC 24843) (Fission yeast).